Consider the following 493-residue polypeptide: Succinate-semialdehyde dehydrogenase [NADP(+)] 2 (493 aa).

242-247 (GSTNVG) serves as a coordination point for NAD(+). Residue Glu264 is part of the active site. The Nucleophile role is filled by Cys298.

The protein belongs to the aldehyde dehydrogenase family. Homotetramer.

It is found in the cytoplasm. The enzyme catalyses succinate semialdehyde + NAD(+) + H2O = succinate + NADH + 2 H(+). The catalysed reaction is succinate semialdehyde + NADP(+) + H2O = succinate + NADPH + 2 H(+). Its pathway is amino-acid degradation; 4-aminobutanoate degradation. Catalyzes the oxidation of succinate semialdehyde to succinate. Can utilize both NAD(+) or NADP(+) as a coenzyme. Functions in the GABA shunt, which allows to bypass 2 reactions in the TCA cycle by removing alpha-ketoglutarate from the cycle and feeding succinate and NADH back into the cycle. The chain is Succinate-semialdehyde dehydrogenase [NADP(+)] 2 (ssd2) from Schizosaccharomyces pombe (strain 972 / ATCC 24843) (Fission yeast).